Reading from the N-terminus, the 146-residue chain is Large ribosomal subunit protein eL28 (146 aa).

The disordered stretch occupies residues 123 to 146 (VRAARKERSSKITFQRKAVRPKRH).

This sequence belongs to the eukaryotic ribosomal protein eL28 family.

This chain is Large ribosomal subunit protein eL28, found in Trypanosoma cruzi.